A 634-amino-acid polypeptide reads, in one-letter code: Probable potassium transport system protein Kup (634 aa).

A run of 12 helical transmembrane segments spans residues 21-41, 58-78, 110-130, 152-172, 179-199, 223-243, 258-278, 296-316, 348-368, 377-397, 403-423, and 427-447; these read LVIG…LYTL, VLGI…LKYV, MYVV…DGVI, PFVV…QRFG, AFGP…VYNM, WHAV…EALY, WQFV…ALML, ALYP…QALI, IYVP…VIGF, AYGV…IIYA, VPAP…CAFF, and IIKF…LFTL.

Belongs to the HAK/KUP transporter (TC 2.A.72) family.

Its subcellular location is the cell inner membrane. The enzyme catalyses K(+)(in) + H(+)(in) = K(+)(out) + H(+)(out). Transport of potassium into the cell. Likely operates as a K(+):H(+) symporter. The protein is Probable potassium transport system protein Kup of Xanthomonas euvesicatoria pv. vesicatoria (strain 85-10) (Xanthomonas campestris pv. vesicatoria).